A 134-amino-acid polypeptide reads, in one-letter code: uncharacterized protein (134 aa).

Residues 13–35 form a helical membrane-spanning segment; the sequence is FFIAFSAYLVVILLMTAVSVYYL.

The protein localises to the membrane. This is an uncharacterized protein from Archaeoglobus fulgidus (strain ATCC 49558 / DSM 4304 / JCM 9628 / NBRC 100126 / VC-16).